Reading from the N-terminus, the 230-residue chain is Ribonuclease HII (230 aa).

The RNase H type-2 domain maps to 28 to 217; it reads FRIAGIDEAG…VKEHLPSQPD (190 aa). The a divalent metal cation site is built by Asp-34, Glu-35, and Asp-126. The segment at 211–230 is disordered; that stretch reads HLPSQPDCDTAGPSTGLFSF.

Belongs to the RNase HII family. Requires Mn(2+) as cofactor. The cofactor is Mg(2+).

The protein localises to the cytoplasm. It catalyses the reaction Endonucleolytic cleavage to 5'-phosphomonoester.. Its function is as follows. Endonuclease that specifically degrades the RNA of RNA-DNA hybrids. This chain is Ribonuclease HII, found in Geobacter sp. (strain M21).